A 430-amino-acid chain; its full sequence is Enolase (430 aa).

Gln167 is a (2R)-2-phosphoglycerate binding site. Residue Glu209 is the Proton donor of the active site. The Mg(2+) site is built by Asp246, Glu287, and Asp314. (2R)-2-phosphoglycerate-binding residues include Lys339, Arg368, Ser369, and Lys390. The Proton acceptor role is filled by Lys339.

This sequence belongs to the enolase family. Mg(2+) is required as a cofactor.

The protein localises to the cytoplasm. The protein resides in the secreted. It is found in the cell surface. The catalysed reaction is (2R)-2-phosphoglycerate = phosphoenolpyruvate + H2O. The protein operates within carbohydrate degradation; glycolysis; pyruvate from D-glyceraldehyde 3-phosphate: step 4/5. Catalyzes the reversible conversion of 2-phosphoglycerate (2-PG) into phosphoenolpyruvate (PEP). It is essential for the degradation of carbohydrates via glycolysis. This is Enolase from Prochlorococcus marinus (strain AS9601).